The following is a 611-amino-acid chain: DNA mismatch repair protein MutL (611 aa).

Belongs to the DNA mismatch repair MutL/HexB family.

This protein is involved in the repair of mismatches in DNA. It is required for dam-dependent methyl-directed DNA mismatch repair. May act as a 'molecular matchmaker', a protein that promotes the formation of a stable complex between two or more DNA-binding proteins in an ATP-dependent manner without itself being part of a final effector complex. The chain is DNA mismatch repair protein MutL from Rickettsia bellii (strain RML369-C).